A 143-amino-acid polypeptide reads, in one-letter code: Protein RJ1 (143 aa).

The signal sequence occupies residues 1-26 (MARVMTRGMARVSTLATVRVSTLARA).

This chain is Protein RJ1 (RJ1), found in Human herpesvirus 6A (strain Uganda-1102) (HHV-6 variant A).